Here is a 473-residue protein sequence, read N- to C-terminus: Ribulose bisphosphate carboxylase large chain (473 aa).

Lys8 is modified (N6,N6,N6-trimethyllysine). Residues Asn117 and Thr167 each contribute to the substrate site. Lys169 acts as the Proton acceptor in catalysis. A substrate-binding site is contributed by Lys171. Residues Lys195, Asp197, and Glu198 each coordinate Mg(2+). Lys195 carries the N6-carboxylysine modification. His288 functions as the Proton acceptor in the catalytic mechanism. Substrate is bound by residues Arg289, His321, and Ser373.

It belongs to the RuBisCO large chain family. Type I subfamily. In terms of assembly, heterohexadecamer of 8 large chains and 8 small chains; disulfide-linked. The disulfide link is formed within the large subunit homodimers. Requires Mg(2+) as cofactor. In terms of processing, the disulfide bond which can form in the large chain dimeric partners within the hexadecamer appears to be associated with oxidative stress and protein turnover.

It is found in the plastid. It localises to the chloroplast. It catalyses the reaction 2 (2R)-3-phosphoglycerate + 2 H(+) = D-ribulose 1,5-bisphosphate + CO2 + H2O. The catalysed reaction is D-ribulose 1,5-bisphosphate + O2 = 2-phosphoglycolate + (2R)-3-phosphoglycerate + 2 H(+). Functionally, ruBisCO catalyzes two reactions: the carboxylation of D-ribulose 1,5-bisphosphate, the primary event in carbon dioxide fixation, as well as the oxidative fragmentation of the pentose substrate in the photorespiration process. Both reactions occur simultaneously and in competition at the same active site. This Amorphophallus titanum (Titan arum) protein is Ribulose bisphosphate carboxylase large chain.